Consider the following 461-residue polypeptide: E3 ubiquitin-protein ligase parkin (461 aa).

The region spanning 30-90 is the Ubiquitin-like domain; that stretch reads VNIYVKSNVG…DSTVIEVLDF (61 aa). Residue Ser92 is modified to Phosphoserine. An RING-type 0; atypical zinc finger spans residues 145–227; the sequence is AHFFIYCANP…SQGENDTAVP (83 aa). 4 residues coordinate Zn(2+): Cys151, Cys155, Cys167, and Cys170. At Thr176 the chain carries Phosphothreonine. Zn(2+)-binding residues include Cys197, Cys202, Cys213, His216, Cys240, Cys243, Cys255, His259, Cys262, Cys265, Cys291, Cys295, Cys334, Cys339, Cys354, Cys356, Cys361, Cys364, His369, Cys373, Cys415, and Cys418. The segment at 236–461 is TRIAD supradomain; it reads KKIPCLACTD…RDCMASHWFG (226 aa). The segment at 240-295 adopts an RING-type 1 zinc-finger fold; the sequence is CLACTDICDPVLVFSCDNRHVTCLECFKNYCGSRLKDRQFLSHPDFGYTLPCPAGC. IBR-type zinc fingers lie at residues 315 to 373 and 411 to 452; these read EQYH…LGEC and LTKP…PWER. The segment at 415–446 adopts an RING-type 2; atypical zinc-finger fold; it reads CPKCRTSTERAGGCMHMICTRANCGFHWCWVC. Cys428 is a catalytic residue. The Zn(2+) site is built by Cys433, Cys438, Cys443, Cys446, Cys454, and His458.

The protein belongs to the RBR family. Parkin subfamily. In terms of assembly, forms an E3 ubiquitin ligase complex with E2 ubiquitin-conjugating enzymes. Auto-ubiquitinates in an E2-dependent manner leading to its own degradation. Post-translationally, phosphorylated. Activation requires phosphorylation at Ser-92 by Pink1 and binding to Pink1-phosphorylated polyubiquitin chains. Phosphorylation at Thr-176 by Pink1 is also important for mitochondrial localization.

It localises to the mitochondrion. The protein resides in the cytoplasm. The protein localises to the cytosol. It catalyses the reaction [E2 ubiquitin-conjugating enzyme]-S-ubiquitinyl-L-cysteine + [acceptor protein]-L-lysine = [E2 ubiquitin-conjugating enzyme]-L-cysteine + [acceptor protein]-N(6)-ubiquitinyl-L-lysine.. Its pathway is protein modification; protein ubiquitination. With respect to regulation, in the autoinhibited state the side chain of Phe-460 inserts into a hydrophobic groove in RING-0, occluding the ubiquitin acceptor site Cys-428, whereas the REP repressor element binds RING-1 and blocks its E2-binding site. Activation of park requires 2 steps: (1) phosphorylation at Ser-92 by Pink1 and (2) binding to phosphorylated ubiquitin, leading to unlock repression of the catalytic Cys-428 by the RING-0 region via an allosteric mechanism and converting park to its fully-active form. According to another report, phosphorylation at Ser-92 by Pink1 is not essential for activation and only binding to phosphorylated ubiquitin is essential to unlock repression. Functionally, E3 ubiquitin-protein ligase which accepts ubiquitin from E2 ubiquitin-conjugating enzymes in the form of a thioester and then directly transfers the ubiquitin to targeted substrates, such as Marf, Opa1, Sep1, Tom20 and porin. Mediates monoubiquitination as well as 'Lys-6', 'Lys-11', 'Lys-48'-linked and 'Lys-63'-linked polyubiquitination of substrates, depending on the context. Protects against mitochondrial dysfunction during cellular stress, by acting downstream of Pink1, to coordinate mitochondrial quality control mechanisms that remove and replace dysfunctional mitochondrial components. Depending on the severity of mitochondrial damage and/or dysfunction, activity ranges from preventing apoptosis and stimulating mitochondrial biogenesis to regulating mitochondrial dynamics and eliminating severely damaged mitochondria via mitophagy. Appears to be particularly important in maintaining the physiology and function of cells with high energy demands that are undergoing stress or altered metabolic environment, including spermatids, muscle cells and neurons such as the dopaminergic (DA) neurons. Activation and recruitment onto the outer membrane of damaged/dysfunctional mitochondria (OMM) requires Pink1-mediated phosphorylation of both park and ubiquitin. In depolarized mitochondria, mediates the decision between mitophagy or preventing apoptosis by inducing either the poly- or monoubiquitination of porin/VDAC; polyubiquitination of porin promotes mitophagy, while monoubiquitination of porin decreases mitochondrial calcium influx which ultimately inhibits apoptosis. When cellular stress results in irreversible mitochondrial damage, promotes the autophagic degradation of dysfunctional depolarized mitochondria (mitophagy) by promoting the ubiquitination of mitochondrial proteins. Preferentially assembles 'Lys-6'-, 'Lys-11'- and 'Lys-63'-linked polyubiquitin chains following mitochondrial damage, leading to mitophagy. In developing tissues, inhibits JNK-mediated apoptosis by negatively regulating bsk transcription. The Pink1-park pathway also promotes fission and/or inhibits fusion of damaged mitochondria by mediating the ubiquitination and subsequent degradation of proteins involved in mitochondrial fusion/fission such as Marf and Opa1. This prevents the refusion of unhealthy mitochondria with the healthy mitochondrial network and/or initiates mitochondrial fragmentation facilitating their later engulfment by autophagosomes. Regulates motility of damaged mitochondria by phosphorylating Miro which likely promotes its park-dependent degradation by the proteasome; in motor neurons, this inhibits mitochondrial intracellular anterograde transport along the axons which probably increases the chance of the mitochondria being eliminated in the soma. The Pink1-park pathway is also involved in mitochondrial regeneration processes such as promoting mitochondrial biogenesis, activating localized mitochondrial repair, promoting selective turnover of mitochondrial proteins and initiating the mitochondrial import of endogenous proteins. Involved in mitochondrial biogenesis via the ubiquitination of transcriptional repressor Paris which leads to its subsequent proteasomal degradation and allows activation of the transcription factor srl. Promotes localized mitochondrial repair by activating the translation of specific nuclear-encoded mitochondrial RNAs (nc-mtRNAs) on the mitochondrial surface, including several key electron transport chain component nc-mtRNAs. The protein is E3 ubiquitin-protein ligase parkin of Pediculus humanus subsp. corporis (Body louse).